Consider the following 279-residue polypeptide: MKVRLKSKKKMKKPALNPERRKFLKEATRTAGGLAGVGILLGLQQNQSLAREGVPLRPPFALQDAKAFSAACIRCGQCVQACPYDMLHLASLLSPVEAGTPYFIARDKPCEMCPDIPCAKACPSGALDRQATDINESRMGLSVLLDHETCLNYQGLRCDVCYRVCPLIDKAITLETQHNPRSDKHALFIPTVHSDACTGCGKCEQACVLEEAAIKILPMDLAKGMLGKHYRLGWEEKAKAGHSLAPKDMISLPTRTPEGTTVIPEPAEPVLAPILGSGK.

The segment at residues 1–50 (MKVRLKSKKKMKKPALNPERRKFLKEATRTAGGLAGVGILLGLQQNQSLA) is a signal peptide (tat-type signal). 4Fe-4S ferredoxin-type domains follow at residues 63 to 92 (QDAKAFSAACIRCGQCVQACPYDMLHLASL), 100 to 132 (TPYFIARDKPCEMCPDIPCAKACPSGALDRQAT), 141 to 177 (LSVLLDHETCLNYQGLRCDVCYRVCPLIDKAITLETQ), and 188 to 219 (FIPTVHSDACTGCGKCEQACVLEEAAIKILPM). Positions 72, 75, 78, 82, 110, 113, 118, 122, 150, 158, 161, 165, 197, 200, 203, and 207 each coordinate [4Fe-4S] cluster.

The cofactor is [4Fe-4S] cluster. Predicted to be exported by the Tat system. The position of the signal peptide cleavage has not been experimentally proven.

It localises to the periplasm. Required for electron transfer from ubiquinol, via NapC, to the periplasmic nitrate reductase NapAB complex. The polypeptide is Ferredoxin-type protein NapG (napG) (Haemophilus influenzae (strain ATCC 51907 / DSM 11121 / KW20 / Rd)).